We begin with the raw amino-acid sequence, 206 residues long: Protease (206 aa).

Active-site residues include H55, D72, and C122.

This sequence belongs to the peptidase C5 family. Interacts with protease cofactor pVI-C; this interaction is necessary for protease activation.

Its subcellular location is the virion. It localises to the host nucleus. The catalysed reaction is Cleaves proteins of the adenovirus and its host cell at two consensus sites: -Yaa-Xaa-Gly-Gly-|-Xaa- and -Yaa-Xaa-Gly-Xaa-|-Gly- (in which Yaa is Met, Ile or Leu, and Xaa is any amino acid).. Requires DNA and protease cofactor for maximal activation. Inside nascent virions, becomes partially activated by binding to the viral DNA, allowing it to cleave the cofactor that binds to the protease and fully activates it. Actin, like the viral protease cofactor, seems to act as a cofactor in the cleavage of cytokeratin 18 and of actin itself. Cleaves viral precursor proteins (pTP, pIIIa, pVI, pVII, pVIII, and pX) inside newly assembled particles giving rise to mature virions. Protease complexed to its cofactor slides along the viral DNA to specifically locate and cleave the viral precursors. Mature virions have a weakened organization compared to the unmature virions, thereby facilitating subsequent uncoating. Without maturation, the particle lacks infectivity and is unable to uncoat. Late in adenovirus infection, in the cytoplasm, may participate in the cytoskeleton destruction. Cleaves host cell cytoskeletal keratins K7 and K18. The polypeptide is Protease (Fowl adenovirus A serotype 1 (strain CELO / Phelps) (FAdV-1)).